The chain runs to 252 residues: Ribosomal RNA small subunit methyltransferase J (252 aa).

S-adenosyl-L-methionine-binding positions include 101–102 (RD), 117–118 (ER), 153–154 (SS), and D171.

This sequence belongs to the methyltransferase superfamily. RsmJ family.

Its subcellular location is the cytoplasm. It catalyses the reaction guanosine(1516) in 16S rRNA + S-adenosyl-L-methionine = N(2)-methylguanosine(1516) in 16S rRNA + S-adenosyl-L-homocysteine + H(+). Functionally, specifically methylates the guanosine in position 1516 of 16S rRNA. The protein is Ribosomal RNA small subunit methyltransferase J of Citrobacter koseri (strain ATCC BAA-895 / CDC 4225-83 / SGSC4696).